The chain runs to 157 residues: Aspartate carbamoyltransferase regulatory chain (157 aa).

Zn(2+)-binding residues include C108, C113, C138, and C141.

This sequence belongs to the PyrI family. Contains catalytic and regulatory chains. Requires Zn(2+) as cofactor.

Its function is as follows. Involved in allosteric regulation of aspartate carbamoyltransferase. This Korarchaeum cryptofilum (strain OPF8) protein is Aspartate carbamoyltransferase regulatory chain.